The chain runs to 521 residues: Protein nucleotidyltransferase YdiU (521 aa).

The ATP site is built by Gly109, Gly111, Arg112, Lys131, Asp143, Gly144, Arg194, and Arg201. Asp270 functions as the Proton acceptor in the catalytic mechanism. Mg(2+)-binding residues include Asn271 and Asp280. Asp280 contributes to the ATP binding site.

Belongs to the SELO family. Mg(2+) serves as cofactor. It depends on Mn(2+) as a cofactor.

The enzyme catalyses L-seryl-[protein] + ATP = 3-O-(5'-adenylyl)-L-seryl-[protein] + diphosphate. The catalysed reaction is L-threonyl-[protein] + ATP = 3-O-(5'-adenylyl)-L-threonyl-[protein] + diphosphate. It catalyses the reaction L-tyrosyl-[protein] + ATP = O-(5'-adenylyl)-L-tyrosyl-[protein] + diphosphate. It carries out the reaction L-histidyl-[protein] + UTP = N(tele)-(5'-uridylyl)-L-histidyl-[protein] + diphosphate. The enzyme catalyses L-seryl-[protein] + UTP = O-(5'-uridylyl)-L-seryl-[protein] + diphosphate. The catalysed reaction is L-tyrosyl-[protein] + UTP = O-(5'-uridylyl)-L-tyrosyl-[protein] + diphosphate. Its function is as follows. Nucleotidyltransferase involved in the post-translational modification of proteins. It can catalyze the addition of adenosine monophosphate (AMP) or uridine monophosphate (UMP) to a protein, resulting in modifications known as AMPylation and UMPylation. The protein is Protein nucleotidyltransferase YdiU of Burkholderia mallei (strain ATCC 23344).